The following is a 350-amino-acid chain: Ookinete surface protein PIMMS43 (350 aa).

Residues 1–24 (MIKLCTFLSLFLIFFFLNLNAING) form the signal peptide. A helical membrane pass occupies residues 330 to 350 (NSIASKLMSVFVFIAVIIYIL).

Forms multimers, perhaps with an unknown protein(s).

It localises to the membrane. In terms of biological role, involved in ookinete evasion of the mosquito complement-like response, oocyst maturation, sporozoite development and infectivity. This Plasmodium berghei (strain Anka) protein is Ookinete surface protein PIMMS43.